The chain runs to 174 residues: Protein GrpE (174 aa).

The protein belongs to the GrpE family. Homodimer.

It localises to the cytoplasm. Functionally, participates actively in the response to hyperosmotic and heat shock by preventing the aggregation of stress-denatured proteins, in association with DnaK and GrpE. It is the nucleotide exchange factor for DnaK and may function as a thermosensor. Unfolded proteins bind initially to DnaJ; upon interaction with the DnaJ-bound protein, DnaK hydrolyzes its bound ATP, resulting in the formation of a stable complex. GrpE releases ADP from DnaK; ATP binding to DnaK triggers the release of the substrate protein, thus completing the reaction cycle. Several rounds of ATP-dependent interactions between DnaJ, DnaK and GrpE are required for fully efficient folding. The sequence is that of Protein GrpE from Pseudothermotoga lettingae (strain ATCC BAA-301 / DSM 14385 / NBRC 107922 / TMO) (Thermotoga lettingae).